A 312-amino-acid polypeptide reads, in one-letter code: Beta-ketoacyl-[acyl-carrier-protein] synthase III 1 (312 aa).

Residues cysteine 113 and histidine 237 contribute to the active site. An ACP-binding region spans residues 238-242 (QANIR). Residue asparagine 267 is part of the active site.

Belongs to the thiolase-like superfamily. FabH family. In terms of assembly, homodimer.

It is found in the cytoplasm. It carries out the reaction malonyl-[ACP] + acetyl-CoA + H(+) = 3-oxobutanoyl-[ACP] + CO2 + CoA. It functions in the pathway lipid metabolism; fatty acid biosynthesis. In terms of biological role, catalyzes the condensation reaction of fatty acid synthesis by the addition to an acyl acceptor of two carbons from malonyl-ACP. Catalyzes the first condensation reaction which initiates fatty acid synthesis and may therefore play a role in governing the total rate of fatty acid production. Possesses both acetoacetyl-ACP synthase and acetyl transacylase activities. Its substrate specificity determines the biosynthesis of branched-chain and/or straight-chain of fatty acids. The polypeptide is Beta-ketoacyl-[acyl-carrier-protein] synthase III 1 (Halalkalibacterium halodurans (strain ATCC BAA-125 / DSM 18197 / FERM 7344 / JCM 9153 / C-125) (Bacillus halodurans)).